The chain runs to 315 residues: 4-hydroxy-3-methylbut-2-enyl diphosphate reductase (315 aa).

Position 12 (cysteine 12) interacts with [4Fe-4S] cluster. (2E)-4-hydroxy-3-methylbut-2-enyl diphosphate is bound by residues histidine 41 and histidine 74. 2 residues coordinate dimethylallyl diphosphate: histidine 41 and histidine 74. The isopentenyl diphosphate site is built by histidine 41 and histidine 74. [4Fe-4S] cluster is bound at residue cysteine 96. Histidine 124 provides a ligand contact to (2E)-4-hydroxy-3-methylbut-2-enyl diphosphate. Histidine 124 contributes to the dimethylallyl diphosphate binding site. Histidine 124 contacts isopentenyl diphosphate. Glutamate 126 serves as the catalytic Proton donor. Threonine 168 is a (2E)-4-hydroxy-3-methylbut-2-enyl diphosphate binding site. Cysteine 198 is a [4Fe-4S] cluster binding site. (2E)-4-hydroxy-3-methylbut-2-enyl diphosphate contacts are provided by serine 226, serine 227, asparagine 228, and serine 270. Dimethylallyl diphosphate is bound by residues serine 226, serine 227, asparagine 228, and serine 270. Isopentenyl diphosphate is bound by residues serine 226, serine 227, asparagine 228, and serine 270.

This sequence belongs to the IspH family. [4Fe-4S] cluster serves as cofactor.

The enzyme catalyses isopentenyl diphosphate + 2 oxidized [2Fe-2S]-[ferredoxin] + H2O = (2E)-4-hydroxy-3-methylbut-2-enyl diphosphate + 2 reduced [2Fe-2S]-[ferredoxin] + 2 H(+). It carries out the reaction dimethylallyl diphosphate + 2 oxidized [2Fe-2S]-[ferredoxin] + H2O = (2E)-4-hydroxy-3-methylbut-2-enyl diphosphate + 2 reduced [2Fe-2S]-[ferredoxin] + 2 H(+). It participates in isoprenoid biosynthesis; dimethylallyl diphosphate biosynthesis; dimethylallyl diphosphate from (2E)-4-hydroxy-3-methylbutenyl diphosphate: step 1/1. Its pathway is isoprenoid biosynthesis; isopentenyl diphosphate biosynthesis via DXP pathway; isopentenyl diphosphate from 1-deoxy-D-xylulose 5-phosphate: step 6/6. Its function is as follows. Catalyzes the conversion of 1-hydroxy-2-methyl-2-(E)-butenyl 4-diphosphate (HMBPP) into a mixture of isopentenyl diphosphate (IPP) and dimethylallyl diphosphate (DMAPP). Acts in the terminal step of the DOXP/MEP pathway for isoprenoid precursor biosynthesis. The chain is 4-hydroxy-3-methylbut-2-enyl diphosphate reductase from Pseudomonas fluorescens (strain ATCC BAA-477 / NRRL B-23932 / Pf-5).